Here is a 2624-residue protein sequence, read N- to C-terminus: Highly reducing polyketide synthase ALT1 (2624 aa).

The 422-residue stretch at 28–449 (VLPLAIVGMG…GSNAHCILES (422 aa)) folds into the Ketosynthase family 3 (KS3) domain. C200 functions as the For beta-ketoacyl synthase activity in the catalytic mechanism. The tract at residues 289 to 308 (VRGTSSNSDGKTPGMSMPSS) is disordered. Active-site for beta-ketoacyl synthase activity residues include H335 and H372. The segment covering 523-544 (ESYSNHHTLTETTNPSNNTATN) has biased composition (polar residues). The tract at residues 523–545 (ESYSNHHTLTETTNPSNNTATNG) is disordered. Residues 639 to 945 (VFTGQGAQWA…GYTPAMIRGK (307 aa)) are malonyl-CoA:ACP transacylase (MAT) domain. The tract at residues 1009-1140 (HELLGSQTLE…GQVRPGRDAH (132 aa)) is N-terminal hotdog fold. Residues 1009-1301 (HELLGSQTLE…LEGGKFSPIE (293 aa)) are dehydratase (DH) domain. A PKS/mFAS DH domain is found at 1009 to 1306 (HELLGSQTLE…FSPIEVDDGI (298 aa)). The active-site Proton acceptor; for dehydratase activity is H1041. The interval 1157-1306 (QYPRPVDSLY…FSPIEVDDGI (150 aa)) is C-terminal hotdog fold. The active-site Proton donor; for dehydratase activity is D1217. Residues 1493–1599 (LEIGAGTGGA…RKLLAPEGYL (107 aa)) are methyltransferase (CMet) domain. The tract at residues 1895–2205 (GLLQTLKWVD…KGTHLGKIVV (311 aa)) is enoyl reductase (ER) (ER) domain. The interval 2230-2509 (TYVLVGGLGG…DSDALRFFIT (280 aa)) is ketoreductase (KR) domain. Positions 2522–2600 (ASLDLVTRTI…GLAKLILDAL (79 aa)) constitute a Carrier domain. Residue S2559 is modified to O-(pantetheine 4'-phosphoryl)serine.

The protein operates within mycotoxin biosynthesis. Functionally, highly reducing polyketide synthase; part of the gene cluster that mediates the biosynthesis of the host-selective toxins (HSTs) AAL-toxins, sphinganine-analog mycotoxins responsible for Alternaria stem canker on tomato by the tomato pathotype. The biosynthesis starts with the polyketide synthase ALT1-catalyzed C-16 carbon chain assembly from one starter acetyl-CoA unit with malonyl-CoA extender units. ALT1 also selectively transfers methyl groups at the first and the third cycle of chain elongation for AAL toxin. The C-16 polyketide chain is released from the enzyme by a nucleophilic attack of a carbanion, which is derived from R-carbon of glycin by decarboxylation, on the carbonyl carbon of polyketide acyl chain. This step is probably catalyzed by a pyridoxal 5'-phosphate-dependent aminoacyl transferase ALT4. The respective functions of the other enzymes encoded by the cluster have still to be elucidated. The sphingosine N-acyltransferase-like protein ALT7 seems not to act as a resistance/self-tolerance factor against the toxin in the toxin biosynthetic gene cluster, contrary to what is expected. The sequence is that of Highly reducing polyketide synthase ALT1 from Alternaria alternata (Alternaria rot fungus).